The following is a 130-amino-acid chain: Small ribosomal subunit protein uS11 (130 aa).

This sequence belongs to the universal ribosomal protein uS11 family. As to quaternary structure, part of the 30S ribosomal subunit. Interacts with proteins S7 and S18. Binds to IF-3.

Located on the platform of the 30S subunit, it bridges several disparate RNA helices of the 16S rRNA. Forms part of the Shine-Dalgarno cleft in the 70S ribosome. The protein is Small ribosomal subunit protein uS11 of Shewanella sediminis (strain HAW-EB3).